The chain runs to 613 residues: Probable potassium transport system protein Kup 1 (613 aa).

12 helical membrane passes run Val-40–Val-60, Met-93–Ile-113, Pro-127–Leu-147, Leu-158–Val-178, Ala-201–Leu-221, Trp-237–Leu-257, Pro-266–Ala-286, Val-288–Leu-308, Ile-327–Phe-347, Ala-356–Met-376, Leu-384–Ala-404, and Val-409–Thr-429.

The protein belongs to the HAK/KUP transporter (TC 2.A.72) family.

Its subcellular location is the cell inner membrane. The enzyme catalyses K(+)(in) + H(+)(in) = K(+)(out) + H(+)(out). Functionally, transport of potassium into the cell. Likely operates as a K(+):H(+) symporter. This chain is Probable potassium transport system protein Kup 1, found in Ralstonia nicotianae (strain ATCC BAA-1114 / GMI1000) (Ralstonia solanacearum).